The chain runs to 345 residues: tRNA pseudouridine synthase B (345 aa).

Residues 1–33 (MGGNSQPHQEPRRVNNDPRAKQQKGNQVRRDRR) form a disordered region. The span at 9–20 (QEPRRVNNDPRA) shows a compositional bias: basic and acidic residues. Aspartate 72 (nucleophile) is an active-site residue.

The protein belongs to the pseudouridine synthase TruB family. Type 1 subfamily.

The catalysed reaction is uridine(55) in tRNA = pseudouridine(55) in tRNA. Its function is as follows. Responsible for synthesis of pseudouridine from uracil-55 in the psi GC loop of transfer RNAs. The protein is tRNA pseudouridine synthase B of Bradyrhizobium diazoefficiens (strain JCM 10833 / BCRC 13528 / IAM 13628 / NBRC 14792 / USDA 110).